The primary structure comprises 384 residues: 1-deoxy-D-xylulose 5-phosphate reductoisomerase (384 aa).

Residues Thr10, Gly11, Ser12, Ile13, Arg37, Asn38, and Asn124 each contribute to the NADPH site. A 1-deoxy-D-xylulose 5-phosphate-binding site is contributed by Lys125. Glu126 lines the NADPH pocket. Position 150 (Asp150) interacts with Mn(2+). Ser151, Glu152, Ser176, and His199 together coordinate 1-deoxy-D-xylulose 5-phosphate. A Mn(2+)-binding site is contributed by Glu152. Residue Gly205 participates in NADPH binding. 1-deoxy-D-xylulose 5-phosphate contacts are provided by Ser212, Asn217, Lys218, and Glu221. Glu221 is a binding site for Mn(2+).

It belongs to the DXR family. Requires Mg(2+) as cofactor. Mn(2+) is required as a cofactor.

The catalysed reaction is 2-C-methyl-D-erythritol 4-phosphate + NADP(+) = 1-deoxy-D-xylulose 5-phosphate + NADPH + H(+). Its pathway is isoprenoid biosynthesis; isopentenyl diphosphate biosynthesis via DXP pathway; isopentenyl diphosphate from 1-deoxy-D-xylulose 5-phosphate: step 1/6. Its function is as follows. Catalyzes the NADPH-dependent rearrangement and reduction of 1-deoxy-D-xylulose-5-phosphate (DXP) to 2-C-methyl-D-erythritol 4-phosphate (MEP). The chain is 1-deoxy-D-xylulose 5-phosphate reductoisomerase from Clostridium perfringens (strain 13 / Type A).